A 43-amino-acid chain; its full sequence is Potassium channel toxin gamma-KTx 4.1 (43 aa).

4 disulfides stabilise this stretch: Cys-5–Cys-23, Cys-11–Cys-34, Cys-20–Cys-39, and Cys-24–Cys-41.

The protein belongs to the ergtoxin family. Gamma-KTx 4 subfamily. As to expression, expressed by the venom gland.

The protein resides in the secreted. Its function is as follows. Reversibly blocks Kv11/ERG potassium channels. This chain is Potassium channel toxin gamma-KTx 4.1, found in Centruroides limpidus (Mexican scorpion).